A 259-amino-acid chain; its full sequence is Hydroxyethylthiazole kinase (259 aa).

Met38 is a substrate binding site. 2 residues coordinate ATP: Arg113 and Ser158. Gly185 is a binding site for substrate.

Belongs to the Thz kinase family. Mg(2+) is required as a cofactor.

The catalysed reaction is 5-(2-hydroxyethyl)-4-methylthiazole + ATP = 4-methyl-5-(2-phosphooxyethyl)-thiazole + ADP + H(+). The protein operates within cofactor biosynthesis; thiamine diphosphate biosynthesis; 4-methyl-5-(2-phosphoethyl)-thiazole from 5-(2-hydroxyethyl)-4-methylthiazole: step 1/1. Catalyzes the phosphorylation of the hydroxyl group of 4-methyl-5-beta-hydroxyethylthiazole (THZ). This Leuconostoc citreum (strain KM20) protein is Hydroxyethylthiazole kinase.